We begin with the raw amino-acid sequence, 475 residues long: ATP synthase subunit beta 1 (475 aa).

153–160 is an ATP binding site; sequence GGAGVGKT.

This sequence belongs to the ATPase alpha/beta chains family. As to quaternary structure, F-type ATPases have 2 components, CF(1) - the catalytic core - and CF(0) - the membrane proton channel. CF(1) has five subunits: alpha(3), beta(3), gamma(1), delta(1), epsilon(1). CF(0) has three main subunits: a(1), b(2) and c(9-12). The alpha and beta chains form an alternating ring which encloses part of the gamma chain. CF(1) is attached to CF(0) by a central stalk formed by the gamma and epsilon chains, while a peripheral stalk is formed by the delta and b chains.

It is found in the cell membrane. It carries out the reaction ATP + H2O + 4 H(+)(in) = ADP + phosphate + 5 H(+)(out). Its function is as follows. Produces ATP from ADP in the presence of a proton gradient across the membrane. The catalytic sites are hosted primarily by the beta subunits. This is ATP synthase subunit beta 1 from Mycoplasmopsis pulmonis (strain UAB CTIP) (Mycoplasma pulmonis).